The chain runs to 284 residues: Nucleotide-binding protein Sbal195_0713 (284 aa).

G8–S15 lines the ATP pocket. D56–N59 is a GTP binding site.

Belongs to the RapZ-like family.

Its function is as follows. Displays ATPase and GTPase activities. This Shewanella baltica (strain OS195) protein is Nucleotide-binding protein Sbal195_0713.